Reading from the N-terminus, the 225-residue chain is Membrane protein (225 aa).

Topologically, residues 1–20 (MPNETNCTLDFEQSVQLFKE) are virion surface. A helical transmembrane segment spans residues 21-41 (YNLFITAFLLFLTIILQYGYA). Residues 42-51 (TRSKVIYTLK) are Intravirion-facing. The helical transmembrane segment at 52 to 72 (MIVLWCFWPLNIAVGVISCTY) threads the bilayer. Residues 73-77 (PPNTG) are Virion surface-facing. A helical membrane pass occupies residues 78–98 (GLVAAIILTVFACLSFVGYWI). At 99–225 (QSIRLFKRCR…VATGGSSLYT (127 aa)) the chain is on the intravirion side.

This sequence belongs to the gammacoronaviruses M protein family. In terms of assembly, homomultimer. Interacts with envelope E protein in the budding compartment of the host cell, which is located between endoplasmic reticulum and the Golgi complex. Forms a complex with HE and S proteins. Interacts with nucleocapsid N protein. This interaction probably participates in RNA packaging into the virus.

The protein localises to the virion membrane. Its subcellular location is the host Golgi apparatus membrane. Functionally, component of the viral envelope that plays a central role in virus morphogenesis and assembly via its interactions with other viral proteins. The sequence is that of Membrane protein from Avian infectious bronchitis virus (strain Beaudette) (IBV).